The primary structure comprises 154 residues: Endoribonuclease YbeY (154 aa).

Residues His-118, His-122, and His-128 each contribute to the Zn(2+) site.

Belongs to the endoribonuclease YbeY family. Zn(2+) serves as cofactor.

It localises to the cytoplasm. In terms of biological role, single strand-specific metallo-endoribonuclease involved in late-stage 70S ribosome quality control and in maturation of the 3' terminus of the 16S rRNA. The polypeptide is Endoribonuclease YbeY (Chloroflexus aurantiacus (strain ATCC 29366 / DSM 635 / J-10-fl)).